We begin with the raw amino-acid sequence, 714 residues long: Transcription factor SFL2 (714 aa).

Residues 15-134 (AFVHKLYTML…LVYIKRRSSS (120 aa)) mediate DNA binding. Disordered regions lie at residues 187–467 (YYQQ…VGVT), 565–658 (STSV…NNTN), and 670–714 (SHSQ…NMNK). Pro residues-rich tracts occupy residues 193–207 (GQVP…PPHQ) and 223–235 (QPPP…PPQP). The span at 266-275 (LDQTQPLSYT) shows a compositional bias: polar residues. Positions 276–285 (PQLEYQQQQY) are enriched in low complexity. Positions 286-296 (PQPPLPPPPPQ) are enriched in pro residues. 2 stretches are compositionally biased toward polar residues: residues 310–321 (DNLSRPSPNEQH) and 354–372 (SEGS…LNNE). Residues 376–389 (ESSTSSSSTTVTST) are compositionally biased toward low complexity. Polar residues-rich tracts occupy residues 413-435 (SRMN…TQNG) and 444-461 (LIPS…TGTD). A compositionally biased stretch (low complexity) spans 574-591 (GPFSTSTSTSTTSPTLSS). Residues 599–608 (EPQNSTIANG) are compositionally biased toward polar residues. Composition is skewed to low complexity over residues 609–641 (TSIR…RQLS) and 648–658 (QQQQQPNNNTN). The segment covering 703 to 714 (SKSDDDTDNMNK) has biased composition (basic and acidic residues).

This sequence belongs to the HSF family.

The protein localises to the nucleus. Its function is as follows. Transcription factor that plays a role of activator of filamentous growth and which is involved in invasive growth at a high temperature. Required for human oral epithelium colonization and damage. Promotes filamentous growth in EFG1- and FLO8-dependent manners. Antagonizes functions of SFL1. This is Transcription factor SFL2 (SFL2) from Candida albicans (strain SC5314 / ATCC MYA-2876) (Yeast).